The following is an 80-amino-acid chain: Large ribosomal subunit protein uL29 (80 aa).

This sequence belongs to the universal ribosomal protein uL29 family.

The chain is Large ribosomal subunit protein uL29 (rpmC) from Mycobacterium leprae (strain TN).